The sequence spans 88 residues: MGCCGCGGCGGCGGCGGGCGGGCGRCTTCRCYRVGCCSSCCPCCRGCCGGCCSTPVICCCRRTCSSCGYSCGKGCCQQKCCCQKQCCC.

The tract at residues 4-72 (CGCGGCGGCG…TCSSCGYSCG (69 aa)) is 10 X 2 AA repeats of CG.

Belongs to the KRTAP type 28 family.

Functionally, in the hair cortex, hair keratin intermediate filaments are embedded in an interfilamentous matrix, consisting of hair keratin-associated proteins (KRTAP), which are essential for the formation of a rigid and resistant hair shaft through their extensive disulfide bond cross-linking with abundant cysteine residues of hair keratins. The matrix proteins include the high-sulfur and high-glycine-tyrosine keratins. This is Small cysteine and glycine repeat-containing protein 1 from Homo sapiens (Human).